Consider the following 165-residue polypeptide: Cyclic pyranopterin monophosphate synthase (165 aa).

Residues 76–78 and 119–120 contribute to the substrate site; these read LCH and ME. Asp134 is an active-site residue.

The protein belongs to the MoaC family. As to quaternary structure, homohexamer; trimer of dimers.

The enzyme catalyses (8S)-3',8-cyclo-7,8-dihydroguanosine 5'-triphosphate = cyclic pyranopterin phosphate + diphosphate. The protein operates within cofactor biosynthesis; molybdopterin biosynthesis. Catalyzes the conversion of (8S)-3',8-cyclo-7,8-dihydroguanosine 5'-triphosphate to cyclic pyranopterin monophosphate (cPMP). In Photobacterium profundum (strain SS9), this protein is Cyclic pyranopterin monophosphate synthase.